The chain runs to 113 residues: Propane 2-monooxygenase, effector component (113 aa).

Belongs to the TmoD/XamoD family. In terms of assembly, the propane 2-monooxygenase multicomponent enzyme system is composed of an electron transfer component and a monooxygenase component interacting with the effector protein PrmD. The electron transfer component is composed of a reductase (PrmB), and the monooxygenase component is formed by a large subunit (PrmA) and a small subunit (PrmC).

In terms of biological role, effector component of the propane 2-monooxygenase multicomponent enzyme system which is involved in the degradation of propane via the O2-dependent hydroxylation of propane. In Rhodococcus jostii (strain RHA1), this protein is Propane 2-monooxygenase, effector component.